Consider the following 49-residue polypeptide: uncharacterized protein (49 aa).

This is an uncharacterized protein from Homo sapiens (Human).